The primary structure comprises 124 residues: Protein archease (124 aa).

4 residues coordinate Ca(2+): His7, Asp10, Asp123, and Thr124.

It belongs to the archease family.

Its function is as follows. Activates the tRNA-splicing ligase complex by facilitating the enzymatic turnover of catalytic subunit RtcB. Acts by promoting the guanylylation of RtcB, a key intermediate step in tRNA ligation. Can also alter the NTP specificity of RtcB such that ATP, dGTP or ITP is used efficiently. May also act as a chaperone or modulator of proteins involved in DNA or RNA processing. The sequence is that of Protein archease from Thermotoga maritima (strain ATCC 43589 / DSM 3109 / JCM 10099 / NBRC 100826 / MSB8).